A 440-amino-acid polypeptide reads, in one-letter code: NADH-quinone oxidoreductase subunit D 1 (440 aa).

This sequence belongs to the complex I 49 kDa subunit family. In terms of assembly, NDH-1 is composed of 14 different subunits. Subunits NuoB, C, D, E, F, and G constitute the peripheral sector of the complex.

It is found in the cell inner membrane. The enzyme catalyses a quinone + NADH + 5 H(+)(in) = a quinol + NAD(+) + 4 H(+)(out). Its function is as follows. NDH-1 shuttles electrons from NADH, via FMN and iron-sulfur (Fe-S) centers, to quinones in the respiratory chain. The immediate electron acceptor for the enzyme in this species is believed to be a menaquinone. Couples the redox reaction to proton translocation (for every two electrons transferred, four hydrogen ions are translocated across the cytoplasmic membrane), and thus conserves the redox energy in a proton gradient. This Chloroherpeton thalassium (strain ATCC 35110 / GB-78) protein is NADH-quinone oxidoreductase subunit D 1.